The following is a 418-amino-acid chain: Probable serine hydroxymethyltransferase (418 aa).

Residues Leu118 and 122 to 124 each bind (6S)-5,6,7,8-tetrahydrofolate; that span reads GHL. Lys226 bears the N6-(pyridoxal phosphate)lysine mark. Residue 351–353 participates in (6S)-5,6,7,8-tetrahydrofolate binding; that stretch reads SPF.

Belongs to the SHMT family. Homodimer. Pyridoxal 5'-phosphate serves as cofactor.

The protein resides in the cytoplasm. It catalyses the reaction (6R)-5,10-methylene-5,6,7,8-tetrahydrofolate + glycine + H2O = (6S)-5,6,7,8-tetrahydrofolate + L-serine. Its pathway is one-carbon metabolism; tetrahydrofolate interconversion. In terms of biological role, catalyzes the reversible interconversion of serine and glycine with tetrahydrofolate (THF) serving as the one-carbon carrier. This reaction serves as the major source of one-carbon groups required for the biosynthesis of purines, thymidylate, methionine, and other important biomolecules. The chain is Probable serine hydroxymethyltransferase from Mesomycoplasma hyopneumoniae (strain 232) (Mycoplasma hyopneumoniae).